The chain runs to 440 residues: L-seryl-tRNA(Sec) selenium transferase (440 aa).

Residue Lys282 is modified to N6-(pyridoxal phosphate)lysine.

It belongs to the SelA family. Pyridoxal 5'-phosphate serves as cofactor.

Its subcellular location is the cytoplasm. The catalysed reaction is L-seryl-tRNA(Sec) + selenophosphate + H(+) = L-selenocysteinyl-tRNA(Sec) + phosphate. It participates in aminoacyl-tRNA biosynthesis; selenocysteinyl-tRNA(Sec) biosynthesis; selenocysteinyl-tRNA(Sec) from L-seryl-tRNA(Sec) (bacterial route): step 1/1. In terms of biological role, converts seryl-tRNA(Sec) to selenocysteinyl-tRNA(Sec) required for selenoprotein biosynthesis. The chain is L-seryl-tRNA(Sec) selenium transferase from Campylobacter jejuni subsp. jejuni serotype O:6 (strain 81116 / NCTC 11828).